The primary structure comprises 519 residues: Bifunctional pantoate ligase/cytidylate kinase (519 aa).

Positions Met-1 to Gly-282 are pantoate--beta-alanine ligase. Met-30 to His-37 lines the ATP pocket. The active-site Proton donor is the His-37. Gln-66 contacts (R)-pantoate. A beta-alanine-binding site is contributed by Gln-66. Gly-155 to Asp-158 is an ATP binding site. (R)-pantoate is bound at residue Gln-161. Cys-192–Arg-195 is a binding site for ATP. Residues Phe-283–Thr-519 are cytidylate kinase.

It in the N-terminal section; belongs to the pantothenate synthetase family. The protein in the C-terminal section; belongs to the cytidylate kinase family. Type 1 subfamily.

It localises to the cytoplasm. It carries out the reaction (R)-pantoate + beta-alanine + ATP = (R)-pantothenate + AMP + diphosphate + H(+). The catalysed reaction is CMP + ATP = CDP + ADP. The enzyme catalyses dCMP + ATP = dCDP + ADP. Its pathway is cofactor biosynthesis; (R)-pantothenate biosynthesis; (R)-pantothenate from (R)-pantoate and beta-alanine: step 1/1. In terms of biological role, catalyzes the condensation of pantoate with beta-alanine in an ATP-dependent reaction via a pantoyl-adenylate intermediate. Catalyzes the transfer of a phosphate group from ATP to either CMP or dCMP to form CDP or dCDP and ADP, respectively. The sequence is that of Bifunctional pantoate ligase/cytidylate kinase from Prochlorococcus marinus (strain SARG / CCMP1375 / SS120).